Consider the following 272-residue polypeptide: MKTVSQLIDMKQKQTKISMVTAYDFPSAKQVEAAGIDMILVGDSLGMTVLGYESTVQVTLADMIHHGRAVRRGAPNTFVVVDMPIGAVGISMTQDLNHALKLYQETNANAIKAEGAHITPFIEKATAIGIPVVAHLGLTPQSVGVMGYKLQGATKEAAEQLILDAKNVEQAGAVALVLEAIPNDLAEEISKHLTIPVIGIGAGKGTDGQVLVYHDMLNYGVEHKAKFVKQFADFSVGVDGLKQYDQEVKSGAFPSEEYTYKKKIMNEVNNND.

Asp-43 and Asp-82 together coordinate Mg(2+). 3-methyl-2-oxobutanoate-binding positions include 43-44 (DS), Asp-82, and Lys-112. A Mg(2+)-binding site is contributed by Glu-114. Glu-179 acts as the Proton acceptor in catalysis.

The protein belongs to the PanB family. In terms of assembly, homodecamer; pentamer of dimers. The cofactor is Mg(2+).

Its subcellular location is the cytoplasm. It carries out the reaction 3-methyl-2-oxobutanoate + (6R)-5,10-methylene-5,6,7,8-tetrahydrofolate + H2O = 2-dehydropantoate + (6S)-5,6,7,8-tetrahydrofolate. It functions in the pathway cofactor biosynthesis; (R)-pantothenate biosynthesis; (R)-pantoate from 3-methyl-2-oxobutanoate: step 1/2. Its function is as follows. Catalyzes the reversible reaction in which hydroxymethyl group from 5,10-methylenetetrahydrofolate is transferred onto alpha-ketoisovalerate to form ketopantoate. The sequence is that of 3-methyl-2-oxobutanoate hydroxymethyltransferase from Staphylococcus aureus (strain JH1).